We begin with the raw amino-acid sequence, 313 residues long: HTH-type transcriptional regulator CysB (313 aa).

The region spanning 1-59 is the HTH lysR-type domain; sequence MNLHQFRFVREAVRQNFNLTEAAKALYTSQPGVSKAIIELEDELGVEIFTRHGKRVRSL. The H-T-H motif DNA-binding region spans 19–38; sequence LTEAAKALYTSQPGVSKAII.

Belongs to the LysR transcriptional regulatory family.

Transcriptional regulator preferentially involved in the control of sulfate transport and reduction. Binds to DNA at target promoter regions. This Burkholderia cenocepacia (strain ATCC BAA-245 / DSM 16553 / LMG 16656 / NCTC 13227 / J2315 / CF5610) (Burkholderia cepacia (strain J2315)) protein is HTH-type transcriptional regulator CysB.